Here is a 124-residue protein sequence, read N- to C-terminus: Quinol oxidase subunit 4 (124 aa).

3 helical membrane-spanning segments follow: residues 16–36 (IVGF…AVYT), 44–64 (LWII…MFMH), and 78–98 (TLFG…IFAA).

It belongs to the cytochrome c oxidase bacterial subunit 4 family.

It localises to the cell membrane. The catalysed reaction is 2 a quinol + O2 = 2 a quinone + 2 H2O. Its function is as follows. Catalyzes quinol oxidation with the concomitant reduction of oxygen to water. Major component for energy conversion during vegetative growth. The chain is Quinol oxidase subunit 4 (qoxD) from Bacillus spizizenii (strain ATCC 23059 / NRRL B-14472 / W23) (Bacillus subtilis subsp. spizizenii).